A 412-amino-acid chain; its full sequence is MSGQLPSSMVALPRQGIIILTYVLAALELTCLFMQFSIIPYLSRTLGLDSVSFGYLQTTFGVLQLLGGPVFGRFADQRGARAALTLSFLAASALYLLLVASCSPALPGVFLLFASRLPAALMHTLPAAQMVITDLTAPTKRPTALSRLGLCFGIGVIFGSLLGGTLSTAYGIQCPAFLAFVVTLLGAVLSFTCIPVTTKEASVQSAHQGGTSVFDLKAISRLLLLPRVLPVFLVKVISGFPSGLFMVMFSIISMDFFQLEAAQAGYLMSFFGILQMMIQGLVIGRLSTRFPEEALLRSSVLVFAVVGLGMALMSNVFHFCLLLPGLVFSLCALNIVTDSMLTKAVSASDTGTMLGLCASVHPLTRTVGPTLGGLLYRSYGVSILGHVQLMVNLLVLLVLWKKPLSQKGDKAR.

Helical transmembrane passes span 16-36, 51-71, 117-137, 148-168, 176-196, 232-252, 264-284, 294-314, 316-336, and 380-400; these read GIIILTYVLAALELTCLFMQF, VSFGYLQTTFGVLQLLGGPVF, LPAALMHTLPAAQMVITDLTA, LGLCFGIGVIFGSLLGGTLST, AFLAFVVTLLGAVLSFTCIPV, FLVKVISGFPSGLFMVMFSII, AGYLMSFFGILQMMIQGLVIG, ALLRSSVLVFAVVGLGMALMS, VFHFCLLLPGLVFSLCALNIV, and GVSILGHVQLMVNLLVLLVLW.

This sequence belongs to the major facilitator (TC 2.A.1) superfamily. Organic cation transporter (TC 2.A.1.19) family.

Its subcellular location is the apical cell membrane. In terms of biological role, may act as a transporter of organic cations based on a proton efflux antiport mechanism. May play a role in the transport of chloroquine and quinidine-related compounds in kidney. Plays a role in the regulation of lipid metabolism. This is Solute carrier family 22 member 18 (Slc67a1) from Rattus norvegicus (Rat).